The primary structure comprises 188 residues: Elongation factor P (188 aa).

Lys34 is modified (N6-(3,6-diaminohexanoyl)-5-hydroxylysine).

It belongs to the elongation factor P family. Post-translationally, may be beta-lysylated on the epsilon-amino group of Lys-34 by the combined action of EpmA and EpmB, and then hydroxylated on the C5 position of the same residue by EpmC (if this protein is present). Lysylation is critical for the stimulatory effect of EF-P on peptide-bond formation. The lysylation moiety may extend toward the peptidyltransferase center and stabilize the terminal 3-CCA end of the tRNA. Hydroxylation of the C5 position on Lys-34 may allow additional potential stabilizing hydrogen-bond interactions with the P-tRNA.

The protein resides in the cytoplasm. It participates in protein biosynthesis; polypeptide chain elongation. Its function is as follows. Involved in peptide bond synthesis. Alleviates ribosome stalling that occurs when 3 or more consecutive Pro residues or the sequence PPG is present in a protein, possibly by augmenting the peptidyl transferase activity of the ribosome. Modification of Lys-34 is required for alleviation. The protein is Elongation factor P of Citrobacter koseri (strain ATCC BAA-895 / CDC 4225-83 / SGSC4696).